The chain runs to 37 residues: Large ribosomal subunit protein bL36 (37 aa).

It belongs to the bacterial ribosomal protein bL36 family.

The protein is Large ribosomal subunit protein bL36 of Nitratidesulfovibrio vulgaris (strain DSM 19637 / Miyazaki F) (Desulfovibrio vulgaris).